Here is a 107-residue protein sequence, read N- to C-terminus: Ferredoxin-1 (107 aa).

4Fe-4S ferredoxin-type domains follow at residues 2 to 30 (AFVV…YEGP) and 31 to 60 (NFLV…SEDE). Cys-9 and Cys-17 together coordinate [3Fe-4S] cluster. Residues Cys-21, Cys-40, Cys-43, and Cys-46 each coordinate [4Fe-4S] cluster. Cys-50 provides a ligand contact to [3Fe-4S] cluster. Residues 84–107 (EKKDPLPDAEDWDGVKGKLQHLER) form a disordered region. Over residues 96-107 (DGVKGKLQHLER) the composition is skewed to basic and acidic residues.

It depends on [4Fe-4S] cluster as a cofactor. The cofactor is [3Fe-4S] cluster.

Ferredoxins are iron-sulfur proteins that transfer electrons in a wide variety of metabolic reactions. This ferredoxin could play a role in regulating gene expression by interacting directly with DNA. The protein is Ferredoxin-1 (fdxA) of Azotobacter vinelandii.